The following is a 122-amino-acid chain: Large ribosomal subunit protein uL14 (122 aa).

This sequence belongs to the universal ribosomal protein uL14 family. In terms of assembly, part of the 50S ribosomal subunit. Forms a cluster with proteins L3 and L19. In the 70S ribosome, L14 and L19 interact and together make contacts with the 16S rRNA in bridges B5 and B8.

Its function is as follows. Binds to 23S rRNA. Forms part of two intersubunit bridges in the 70S ribosome. In Desulfovibrio desulfuricans (strain ATCC 27774 / DSM 6949 / MB), this protein is Large ribosomal subunit protein uL14.